The primary structure comprises 816 residues: Phosphatidylinositol 4-kinase beta (816 aa).

Disordered stretches follow at residues 1–29 (MGDM…GGSL), 99–121 (EEED…RRRQ), and 250–318 (RKRE…SFSS). Gly2 carries the N-acetylglycine modification. Residues 2 to 68 (GDMVVEPATL…VKLLHGGVAI (67 aa)) form an interaction with ACBD3 region. Positions 10–29 (TLKPTSEPTPSPSGNNGGSL) are enriched in low complexity. The 182-residue stretch at 61–242 (LLHGGVAISS…GTKLRKLILS (182 aa)) folds into the PIK helical domain. Ser258 is modified (phosphoserine). Residue Thr263 is modified to Phosphothreonine. 5 positions are modified to phosphoserine: Ser266, Ser275, Ser277, Ser284, and Ser294. Composition is skewed to polar residues over residues 278-297 (DATA…SNPK) and 306-318 (SSST…SFSS). A Phosphoserine modification is found at Ser428. Position 438 is a phosphothreonine (Thr438). Phosphoserine is present on Ser511. Phosphothreonine occurs at positions 517 and 519. The PI3K/PI4K catalytic domain occupies 535–801 (EPWQEKVRRI…MVDGSMRSIT (267 aa)). The G-loop stretch occupies residues 541 to 547 (VRRIREG). The tract at residues 668 to 676 (QVKDRHNGN) is catalytic loop. The interval 687–711 (HIDFGFILSSSPRNLGFETSAFKLT) is activation loop.

It belongs to the PI3/PI4-kinase family. Type III PI4K subfamily. Interacts with ARF1 and ARF3 in the Golgi complex, but not with ARF4, ARF5 or ARF6. Interacts with NCS1/FREQ in a calcium-independent manner. Interacts with CALN1/CABP8 and CALN2/CABP7; in a calcium-dependent manner; this interaction competes with NCS1/FREQ binding. Interacts with ACBD3. Interacts with ARMH3, YWHAB, YWHAE, YWHAG, YWHAH, YWHAQ, YWHAZ and SFN. Interacts with GGA2 (via VHS domain); the interaction is important for PI4KB location at the Golgi apparatus membrane. Interacts with ATG9A. Mg(2+) is required as a cofactor. Mn(2+) serves as cofactor. As to expression, strongly expressed in brain, kidney, lung, small intestine, uterus and adrenal gland. Weaker expression in liver, heart, skeletal muscle, thymus and testis. Not detected in spleen.

It is found in the golgi apparatus. The protein resides in the endomembrane system. It localises to the mitochondrion outer membrane. The protein localises to the rough endoplasmic reticulum membrane. Its subcellular location is the golgi apparatus membrane. It catalyses the reaction a 1,2-diacyl-sn-glycero-3-phospho-(1D-myo-inositol) + ATP = a 1,2-diacyl-sn-glycero-3-phospho-(1D-myo-inositol 4-phosphate) + ADP + H(+). With respect to regulation, inhibited by wortmannin. Increased kinase activity upon interaction with NCS1/FREQ. Phosphorylates phosphatidylinositol (PI) in the first committed step in the production of the second messenger inositol-1,4,5,-trisphosphate (PIP). May regulate Golgi disintegration/reorganization during mitosis, possibly via its phosphorylation. Involved in Golgi-to-plasma membrane trafficking. May play an important role in the inner ear development. This Rattus norvegicus (Rat) protein is Phosphatidylinositol 4-kinase beta (Pi4kb).